The chain runs to 328 residues: Porphobilinogen deaminase (328 aa).

Position 245 is an S-(dipyrrolylmethanemethyl)cysteine (cysteine 245).

This sequence belongs to the HMBS family. As to quaternary structure, monomer. Dipyrromethane serves as cofactor.

It carries out the reaction 4 porphobilinogen + H2O = hydroxymethylbilane + 4 NH4(+). The protein operates within porphyrin-containing compound metabolism; protoporphyrin-IX biosynthesis; coproporphyrinogen-III from 5-aminolevulinate: step 2/4. It participates in porphyrin-containing compound metabolism; chlorophyll biosynthesis. Tetrapolymerization of the monopyrrole PBG into the hydroxymethylbilane pre-uroporphyrinogen in several discrete steps. This is Porphobilinogen deaminase from Gloeobacter violaceus (strain ATCC 29082 / PCC 7421).